The chain runs to 487 residues: N-succinylglutamate 5-semialdehyde dehydrogenase (487 aa).

The segment at 1–23 is disordered; sequence MTHFIKGQWHTGKGHDVASSNPA. NAD(+) is bound at residue 220-225; sequence GSSRTG. Residues Glu-243 and Cys-277 contribute to the active site.

Belongs to the aldehyde dehydrogenase family. AstD subfamily.

It catalyses the reaction N-succinyl-L-glutamate 5-semialdehyde + NAD(+) + H2O = N-succinyl-L-glutamate + NADH + 2 H(+). The protein operates within amino-acid degradation; L-arginine degradation via AST pathway; L-glutamate and succinate from L-arginine: step 4/5. Its function is as follows. Catalyzes the NAD-dependent reduction of succinylglutamate semialdehyde into succinylglutamate. The polypeptide is N-succinylglutamate 5-semialdehyde dehydrogenase (Shewanella oneidensis (strain ATCC 700550 / JCM 31522 / CIP 106686 / LMG 19005 / NCIMB 14063 / MR-1)).